The chain runs to 861 residues: DNA mismatch repair protein MutS (861 aa).

618 to 625 (GPNMGGKS) is a binding site for ATP.

It belongs to the DNA mismatch repair MutS family.

In terms of biological role, this protein is involved in the repair of mismatches in DNA. It is possible that it carries out the mismatch recognition step. This protein has a weak ATPase activity. The polypeptide is DNA mismatch repair protein MutS (Shewanella frigidimarina (strain NCIMB 400)).